Here is a 420-residue protein sequence, read N- to C-terminus: Serine hydroxymethyltransferase (420 aa).

Residues Leu-121 and 125-127 contribute to the (6S)-5,6,7,8-tetrahydrofolate site; that span reads GHL. Lys-230 carries the N6-(pyridoxal phosphate)lysine modification. Residues Glu-246 and 354–356 contribute to the (6S)-5,6,7,8-tetrahydrofolate site; that span reads SPF.

The protein belongs to the SHMT family. As to quaternary structure, homodimer. Pyridoxal 5'-phosphate is required as a cofactor.

It is found in the cytoplasm. It catalyses the reaction (6R)-5,10-methylene-5,6,7,8-tetrahydrofolate + glycine + H2O = (6S)-5,6,7,8-tetrahydrofolate + L-serine. The protein operates within one-carbon metabolism; tetrahydrofolate interconversion. It functions in the pathway amino-acid biosynthesis; glycine biosynthesis; glycine from L-serine: step 1/1. Its function is as follows. Catalyzes the reversible interconversion of serine and glycine with tetrahydrofolate (THF) serving as the one-carbon carrier. This reaction serves as the major source of one-carbon groups required for the biosynthesis of purines, thymidylate, methionine, and other important biomolecules. Also exhibits THF-independent aldolase activity toward beta-hydroxyamino acids, producing glycine and aldehydes, via a retro-aldol mechanism. This Rickettsia canadensis (strain McKiel) protein is Serine hydroxymethyltransferase.